We begin with the raw amino-acid sequence, 95 residues long: Integration host factor subunit beta (95 aa).

The protein belongs to the bacterial histone-like protein family. As to quaternary structure, heterodimer of an alpha and a beta chain.

Functionally, this protein is one of the two subunits of integration host factor, a specific DNA-binding protein that functions in genetic recombination as well as in transcriptional and translational control. The sequence is that of Integration host factor subunit beta from Colwellia psychrerythraea (strain 34H / ATCC BAA-681) (Vibrio psychroerythus).